The sequence spans 697 residues: PHD finger protein At1g33420 (697 aa).

The segment at 603–653 (KVDCKCGTKDDDGERMLACDGCGVWHHTRCIGINNADALPSKFLCFRCIEL) adopts a PHD-type zinc-finger fold.

It localises to the nucleus. The polypeptide is PHD finger protein At1g33420 (Arabidopsis thaliana (Mouse-ear cress)).